We begin with the raw amino-acid sequence, 310 residues long: MENLPTTYDGPVHIAVIGGTGLSKLEGYVPVAALNPTTPWGSPSSPLMIFEHNGHAVAFLARHGLYHQLAPHEVPARANIAALRSIGVRTIIAFSAVGSLREEIKPMDFVIPDQIIDRTKGIRPFTFYEGGVVGHVGFADPFDAGLAQVVEKCASAMKGDGVVLHNKGTIICMEGPAFSTRAESHMYRSWGGSVINMSALPEAKLAREAELAYQMICMATDYDCWRDEAGEDVDVAMVMKYMAANGENAKHLVGAVLDELLKQDNSDLVLAKKWQGSAQGAVKFMTKPEGRDPEAMKRVEFLFPGFWEQN.

Phosphate-binding positions include T20, R62 to H63, and S95 to A96. Residue M197 coordinates substrate. S198 lines the phosphate pocket. D221 to D223 is a binding site for substrate.

Belongs to the PNP/MTAP phosphorylase family. MTAP subfamily. As to quaternary structure, homotrimer.

It localises to the cytoplasm. The protein resides in the nucleus. The catalysed reaction is S-methyl-5'-thioadenosine + phosphate = 5-(methylsulfanyl)-alpha-D-ribose 1-phosphate + adenine. It participates in amino-acid biosynthesis; L-methionine biosynthesis via salvage pathway; S-methyl-5-thio-alpha-D-ribose 1-phosphate from S-methyl-5'-thioadenosine (phosphorylase route): step 1/1. Catalyzes the reversible phosphorylation of S-methyl-5'-thioadenosine (MTA) to adenine and 5-methylthioribose-1-phosphate. Involved in the breakdown of MTA, a major by-product of polyamine biosynthesis. Responsible for the first step in the methionine salvage pathway after MTA has been generated from S-adenosylmethionine. Has broad substrate specificity with 6-aminopurine nucleosides as preferred substrates. This Neurospora crassa (strain ATCC 24698 / 74-OR23-1A / CBS 708.71 / DSM 1257 / FGSC 987) protein is S-methyl-5'-thioadenosine phosphorylase.